The sequence spans 344 residues: Phenylalanine--tRNA ligase alpha subunit (344 aa).

Glu-255 is a Mg(2+) binding site.

The protein belongs to the class-II aminoacyl-tRNA synthetase family. Phe-tRNA synthetase alpha subunit type 1 subfamily. In terms of assembly, tetramer of two alpha and two beta subunits. Requires Mg(2+) as cofactor.

The protein resides in the cytoplasm. It catalyses the reaction tRNA(Phe) + L-phenylalanine + ATP = L-phenylalanyl-tRNA(Phe) + AMP + diphosphate + H(+). The sequence is that of Phenylalanine--tRNA ligase alpha subunit from Sulfurihydrogenibium sp. (strain YO3AOP1).